Consider the following 424-residue polypeptide: Probable carboxypeptidase AN5749 (424 aa).

An N-terminal signal peptide occupies residues 1-17; that stretch reads MNLSILAALALVSFSTA. An N-linked (GlcNAc...) asparagine glycan is attached at Asn-58. Asp-139 serves as a coordination point for Zn(2+). Glu-171 functions as the Proton acceptor in the catalytic mechanism. Glu-172 lines the Zn(2+) pocket. N-linked (GlcNAc...) asparagine glycosylation is found at Asn-184 and Asn-323.

Belongs to the peptidase M20A family. The cofactor is Zn(2+).

It is found in the secreted. This chain is Probable carboxypeptidase AN5749, found in Emericella nidulans (strain FGSC A4 / ATCC 38163 / CBS 112.46 / NRRL 194 / M139) (Aspergillus nidulans).